A 154-amino-acid polypeptide reads, in one-letter code: Interleukin-7 (154 aa).

Positions 1–25 (MFHVSFRYIFGIPPLILVLLPVTSS) are cleaved as a signal peptide. 3 cysteine pairs are disulfide-bonded: Cys-27–Cys-145, Cys-58–Cys-133, and Cys-71–Cys-116. Asn-94 and Asn-115 each carry an N-linked (GlcNAc...) asparagine glycan.

It belongs to the IL-7/IL-9 family. As to quaternary structure, interacts with IL7R and CSF2RG. Post-translationally, three disulfide bonds are present.

The protein resides in the secreted. Functionally, hematopoietic cytokine that plays an essential role in the development, expansion, and survival of naive and memory T-cells and B-cells thereby regulating the number of mature lymphocytes and maintaining lymphoid homeostasis. Mechanistically, exerts its biological effects through a receptor composed of IL7RA subunit and the cytokine receptor common subunit gamma/CSF2RG. Binding to the receptor leads to activation of various kinases including JAK1 or JAK3 depending on the cell type and subsequently propagation of signals through activation of several downstream signaling pathways including the PI3K/Akt/mTOR or the JAK-STAT5. The protein is Interleukin-7 (Il7) of Rattus norvegicus (Rat).